A 333-amino-acid chain; its full sequence is Quinolinate synthase (333 aa).

Iminosuccinate contacts are provided by histidine 41 and serine 58. Cysteine 103 lines the [4Fe-4S] cluster pocket. Residues 129–131 (YIN) and serine 146 contribute to the iminosuccinate site. A [4Fe-4S] cluster-binding site is contributed by cysteine 189. Iminosuccinate is bound by residues 215 to 217 (HPE) and threonine 232. Cysteine 282 serves as a coordination point for [4Fe-4S] cluster.

This sequence belongs to the quinolinate synthase family. Type 2 subfamily. It depends on [4Fe-4S] cluster as a cofactor.

The protein localises to the cytoplasm. It carries out the reaction iminosuccinate + dihydroxyacetone phosphate = quinolinate + phosphate + 2 H2O + H(+). Its pathway is cofactor biosynthesis; NAD(+) biosynthesis; quinolinate from iminoaspartate: step 1/1. In terms of biological role, catalyzes the condensation of iminoaspartate with dihydroxyacetone phosphate to form quinolinate. The sequence is that of Quinolinate synthase from Prochlorococcus marinus (strain MIT 9303).